Here is a 308-residue protein sequence, read N- to C-terminus: Probable GTP 3',8-cyclase (308 aa).

Positions 4–222 (RFGRPLEDLR…KKLIRKKHFR (219 aa)) constitute a Radical SAM core domain. Arg-13 provides a ligand contact to GTP. [4Fe-4S] cluster contacts are provided by Cys-20, Cys-24, and Cys-27. Lys-60 provides a ligand contact to GTP. Gly-64 serves as a coordination point for S-adenosyl-L-methionine. Thr-90 lines the GTP pocket. Ser-114 contributes to the S-adenosyl-L-methionine binding site. Lys-151 provides a ligand contact to GTP. Cys-245 and Cys-248 together coordinate [4Fe-4S] cluster. Residue 250–252 (RIR) coordinates GTP. Cys-262 serves as a coordination point for [4Fe-4S] cluster.

This sequence belongs to the radical SAM superfamily. MoaA family. [4Fe-4S] cluster is required as a cofactor.

The catalysed reaction is GTP + AH2 + S-adenosyl-L-methionine = (8S)-3',8-cyclo-7,8-dihydroguanosine 5'-triphosphate + 5'-deoxyadenosine + L-methionine + A + H(+). The protein operates within cofactor biosynthesis; molybdopterin biosynthesis. Its function is as follows. Catalyzes the cyclization of GTP to (8S)-3',8-cyclo-7,8-dihydroguanosine 5'-triphosphate. This Saccharolobus solfataricus (strain ATCC 35092 / DSM 1617 / JCM 11322 / P2) (Sulfolobus solfataricus) protein is Probable GTP 3',8-cyclase.